We begin with the raw amino-acid sequence, 351 residues long: Nicotinate-nucleotide--dimethylbenzimidazole phosphoribosyltransferase (351 aa).

E317 (proton acceptor) is an active-site residue.

It belongs to the CobT family.

It carries out the reaction 5,6-dimethylbenzimidazole + nicotinate beta-D-ribonucleotide = alpha-ribazole 5'-phosphate + nicotinate + H(+). Its pathway is nucleoside biosynthesis; alpha-ribazole biosynthesis; alpha-ribazole from 5,6-dimethylbenzimidazole: step 1/2. In terms of biological role, catalyzes the synthesis of alpha-ribazole-5'-phosphate from nicotinate mononucleotide (NAMN) and 5,6-dimethylbenzimidazole (DMB). In Pseudomonas aeruginosa (strain ATCC 15692 / DSM 22644 / CIP 104116 / JCM 14847 / LMG 12228 / 1C / PRS 101 / PAO1), this protein is Nicotinate-nucleotide--dimethylbenzimidazole phosphoribosyltransferase.